We begin with the raw amino-acid sequence, 146 residues long: MORN repeat-containing protein 4 (146 aa).

4 MORN repeats span residues 16–38 (YRGEWKEGRRHGFGQLMFADGGT), 39–61 (YLGHFENGLFNGFGVLTFSDGSR), 62–84 (YEGEFAQGKFNGVGVFIRYDNMT), and 85–107 (FEGEFKNGRVDGFGLLTFPDGSH).

Interacts with MYO3A.

It is found in the cytoplasm. The protein localises to the cell projection. Its subcellular location is the filopodium tip. It localises to the stereocilium. Plays a role in promoting axonal degeneration following neuronal injury by toxic insult or trauma. The protein is MORN repeat-containing protein 4 (MORN4) of Homo sapiens (Human).